The primary structure comprises 108 residues: Urease subunit beta (108 aa).

It belongs to the urease beta subunit family. In terms of assembly, heterotrimer of UreA (gamma), UreB (beta) and UreC (alpha) subunits. Three heterotrimers associate to form the active enzyme.

It localises to the cytoplasm. It carries out the reaction urea + 2 H2O + H(+) = hydrogencarbonate + 2 NH4(+). It participates in nitrogen metabolism; urea degradation; CO(2) and NH(3) from urea (urease route): step 1/1. This is Urease subunit beta from Chromohalobacter salexigens (strain ATCC BAA-138 / DSM 3043 / CIP 106854 / NCIMB 13768 / 1H11).